A 256-amino-acid chain; its full sequence is Acetyl-coenzyme A carboxylase carboxyl transferase subunit alpha (256 aa).

One can recognise a CoA carboxyltransferase C-terminal domain in the interval 1–236 (MTKITRIIKE…KEEIAAELDS (236 aa)).

The protein belongs to the AccA family. Acetyl-CoA carboxylase is a heterohexamer composed of biotin carboxyl carrier protein (AccB), biotin carboxylase (AccC) and two subunits each of ACCase subunit alpha (AccA) and ACCase subunit beta (AccD).

The protein resides in the cytoplasm. The enzyme catalyses N(6)-carboxybiotinyl-L-lysyl-[protein] + acetyl-CoA = N(6)-biotinyl-L-lysyl-[protein] + malonyl-CoA. Its pathway is lipid metabolism; malonyl-CoA biosynthesis; malonyl-CoA from acetyl-CoA: step 1/1. In terms of biological role, component of the acetyl coenzyme A carboxylase (ACC) complex. First, biotin carboxylase catalyzes the carboxylation of biotin on its carrier protein (BCCP) and then the CO(2) group is transferred by the carboxyltransferase to acetyl-CoA to form malonyl-CoA. This Streptococcus sanguinis (strain SK36) protein is Acetyl-coenzyme A carboxylase carboxyl transferase subunit alpha.